A 68-amino-acid polypeptide reads, in one-letter code: Large ribosomal subunit protein uL29 (68 aa).

It belongs to the universal ribosomal protein uL29 family.

This is Large ribosomal subunit protein uL29 from Streptococcus uberis (strain ATCC BAA-854 / 0140J).